A 90-amino-acid chain; its full sequence is Probable Fe(2+)-trafficking protein (90 aa).

It belongs to the Fe(2+)-trafficking protein family.

Functionally, could be a mediator in iron transactions between iron acquisition and iron-requiring processes, such as synthesis and/or repair of Fe-S clusters in biosynthetic enzymes. The protein is Probable Fe(2+)-trafficking protein of Dechloromonas aromatica (strain RCB).